The following is a 563-amino-acid chain: Proton channel OTOP2 (563 aa).

Residues 1-20 are disordered; it reads MSEELVPHPNESLPGPRASP. 12 consecutive transmembrane segments (helical) span residues 30–50, 62–82, 100–120, 137–157, 173–193, 242–262, 290–310, 325–345, 373–393, 403–423, 496–516, and 528–548; these read LLSV…ISGG, VFAL…FYLL, PIWL…MDVF, ILHP…LWIS, LMFT…DESV, FYLY…LYVM, FFAG…VFIL, ALVI…LVSL, LMGA…AVVV, LNLS…VFII, DISL…AFGA, and FYGY…GIFY.

This sequence belongs to the otopetrin family. Expressed at higher level in stomach, testis and olfactory bulb.

It localises to the cell membrane. It carries out the reaction H(+)(in) = H(+)(out). Actives at neutral and alkaline extracellular pH, acid extracellular pH appears to inhibit the channel. Insensitive to activation by Zn(2+). Its function is as follows. Proton-selective ion channel open at neutral pH. Actives at neutral and alkaline extracellular pH, likely participates in some alkali-related physiological activities. In Mus musculus (Mouse), this protein is Proton channel OTOP2.